A 350-amino-acid polypeptide reads, in one-letter code: Phosphoribosylformylglycinamidine cyclo-ligase (350 aa).

Belongs to the AIR synthase family.

It is found in the cytoplasm. It catalyses the reaction 2-formamido-N(1)-(5-O-phospho-beta-D-ribosyl)acetamidine + ATP = 5-amino-1-(5-phospho-beta-D-ribosyl)imidazole + ADP + phosphate + H(+). It functions in the pathway purine metabolism; IMP biosynthesis via de novo pathway; 5-amino-1-(5-phospho-D-ribosyl)imidazole from N(2)-formyl-N(1)-(5-phospho-D-ribosyl)glycinamide: step 2/2. In Cupriavidus metallidurans (strain ATCC 43123 / DSM 2839 / NBRC 102507 / CH34) (Ralstonia metallidurans), this protein is Phosphoribosylformylglycinamidine cyclo-ligase.